The sequence spans 785 residues: MIANVDLHIHSRFSGGTSKDMNVENILKYGKLKGLNIIGTGDCTHPDYLEEIKQYKDRELILTTEIEDKNRVHHLILLPSISKVEELREILKKYSKDIDKEGRPRVSIGGAELLEIVRDVGGLIGPAHCVPPDTLLILENGFKRIVDIKVGDKVLTHENRFKKVEKVYKRRYIGDIIKIKVRYFPEEIILTPEHPVYAIKTEKRCDGSHGICKFNCLTQYTNPSCKKRYRKYKREWIIAKDLKVGDVIVYPIPNRVRDIKYLSLDKYLSNIKREFCRSRIPEKIEVSEEFCRLVGYFLSEGYCFRDGIGFALGENEKKIIDDIEYLMKKIFNLKPKIRDDGRSEGIELKYYSRVLRDFFGDMFYCGDEKRAWNKALPNEFLYLPKNKQLQIFIGWWRGDKGVTTSEILMNQLRLISLRLGFIITFSKHVPKNPKIGDREVIKYHARWQGRVSILDEKIVDELKNEDIKLPKKDVRYGWIKGNYLYAPIIRIGREYYDGFVYNLEVEDDSSYVTVSGTLHNCFTPWTSLYKSFDSIYDCYNKKPDFVELGLSADTDMADMIPELRDLPFLSNSDAHSYHPHRLGREFNQIEVDYIGGIEDNFEQIKKAIKHNKIIANYGLDPKLGKYHLTACSKCHTRFKLEDAKKYNWKCPKCGGSIKKGVLSRVEELSDGKIEHPKFRPPYYKLIPLAEMISLTIGKGIFTKAVQSLWEEFIKKYGNEIEVLINADIDELSKIHPKVAETINLFRKGKIYIYPGGGGEYGKISFKPQKVEWYREEVTLDRWLKQ.

Positions 293–421 (LVGYFLSEGY…LRLISLRLGF (129 aa)) constitute a DOD-type homing endonuclease domain.

Post-translationally, this protein undergoes a protein self splicing that involves a post-translational excision of the intervening region (intein) followed by peptide ligation.

This is an uncharacterized protein from Methanocaldococcus jannaschii (strain ATCC 43067 / DSM 2661 / JAL-1 / JCM 10045 / NBRC 100440) (Methanococcus jannaschii).